We begin with the raw amino-acid sequence, 1387 residues long: Kinesin-like protein KIF15 (1387 aa).

The segment at 1–23 (MAPGCKSELRNVTNSHSNQPSNE) is disordered. Over residues 10–22 (RNVTNSHSNQPSN) the composition is skewed to polar residues. The Kinesin motor domain occupies 26–363 (AIKVFVRIRP…LNFAQRAKLI (338 aa)). An ATP-binding site is contributed by 109 to 116 (GQTGSGKT). A coiled-coil region spans residues 368 to 1132 (VVNEDTQGNV…LKMRQLEHVM (765 aa)). Position 568 is a phosphoserine (Ser568). Lys1009 carries the N6-acetyllysine modification. Residues Ser1141 and Ser1169 each carry the phosphoserine modification.

The protein belongs to the TRAFAC class myosin-kinesin ATPase superfamily. Kinesin family. KLP2 subfamily. In terms of assembly, interacts with MKI67 and TPX2. Expressed in brain (neurons in the external germinal layer of the cerebellum and in ventricular zones) (at protein level). Expressed in spleen and testis.

Its subcellular location is the cytoplasm. It is found in the cytoskeleton. The protein localises to the spindle. In terms of biological role, plus-end directed kinesin-like motor enzyme involved in mitotic spindle assembly. This Mus musculus (Mouse) protein is Kinesin-like protein KIF15 (Kif15).